The following is a 472-amino-acid chain: Methanethiol oxidase (472 aa).

The protein belongs to the selenium-binding protein family.

The protein localises to the nucleus. It localises to the cytoplasm. The protein resides in the cytosol. Its subcellular location is the membrane. The catalysed reaction is methanethiol + O2 + H2O = hydrogen sulfide + formaldehyde + H2O2 + H(+). Its pathway is organosulfur degradation. Its function is as follows. Catalyzes the oxidation of methanethiol, an organosulfur compound known to be produced in substantial amounts by gut bacteria. Selenium-binding protein which may be involved in the sensing of reactive xenobiotics in the cytoplasm. May be involved in intra-Golgi protein transport. The chain is Methanethiol oxidase (selenbp1-b) from Xenopus laevis (African clawed frog).